Here is a 230-residue protein sequence, read N- to C-terminus: Ribosomal RNA small subunit methyltransferase G (230 aa).

S-adenosyl-L-methionine contacts are provided by residues Gly74, Phe79, Ala124 to Glu125, and Arg141.

Belongs to the methyltransferase superfamily. RNA methyltransferase RsmG family.

It is found in the cytoplasm. Functionally, specifically methylates the N7 position of a guanine in 16S rRNA. This chain is Ribosomal RNA small subunit methyltransferase G, found in Acholeplasma laidlawii (strain PG-8A).